The sequence spans 134 residues: Probable histone H2A.3 (134 aa).

Belongs to the histone H2A family. In terms of assembly, the nucleosome is a histone octamer containing two molecules each of H2A, H2B, H3 and H4 assembled in one H3-H4 heterotetramer and two H2A-H2B heterodimers. The octamer wraps approximately 147 bp of DNA.

It localises to the nucleus. The protein localises to the chromosome. Its function is as follows. Core component of nucleosome. Nucleosomes wrap and compact DNA into chromatin, limiting DNA accessibility to the cellular machineries which require DNA as a template. Histones thereby play a central role in transcription regulation, DNA repair, DNA replication and chromosomal stability. DNA accessibility is regulated via a complex set of post-translational modifications of histones, also called histone code, and nucleosome remodeling. The polypeptide is Probable histone H2A.3 (Oryza sativa subsp. indica (Rice)).